A 744-amino-acid polypeptide reads, in one-letter code: Prestin (744 aa).

The Cytoplasmic portion of the chain corresponds to 1-75; that stretch reads MDHAEENEIP…PITKWLPAYK (75 aa). A helical transmembrane segment spans residues 76–104; sequence FKEYVLGDLVSGISTGVLQLPQGLAFAML. Residues 105-108 lie on the Extracellular side of the membrane; that stretch reads AAVP. The helical transmembrane segment at 109–126 threads the bilayer; sequence PVFGLYSSFYPVIMYCFF. Topologically, residues 127–137 are cytoplasmic; sequence GTSRHISIGPF. The chain crosses the membrane as a helical span at residues 138-149; that stretch reads AVISLMIGGVAV. Over 150-168 the chain is Extracellular; sequence RLVPDDIVIPGGVNATNGT. An Involved in motor function motif is present at residues 158 to 168; that stretch reads IPGGVNATNGT. N-linked (GlcNAc...) asparagine glycosylation is found at N163 and N166. A helical transmembrane segment spans residues 169-196; that stretch reads EARDALRVKVAMSVTLLSGIIQFCLGVC. Topologically, residues 197–206 are cytoplasmic; it reads RFGFVAIYLT. A helical membrane pass occupies residues 207-230; that stretch reads EPLVRGFTTAAAVHVFTSMLKYLF. The Extracellular portion of the chain corresponds to 231-241; it reads GVKTKRYSGIF. Positions 242–253 form an intramembrane region, helical; it reads SVVYSTVAVLQN. Over 254–258 the chain is Extracellular; that stretch reads VKNLN. A helical transmembrane segment spans residues 259 to 276; that stretch reads VCSLGVGLMVFGLLLGGK. Over 277 to 291 the chain is Cytoplasmic; that stretch reads EFNERFKEKLPAPIP. The chain crosses the membrane as a helical span at residues 292–307; that stretch reads LEFFAVVMGTGISAGF. Residues 308–332 lie on the Extracellular side of the membrane; sequence NLHESYSVDVVGTLPLGLLPPANPD. Residues 333-359 traverse the membrane as a helical segment; sequence TSLFHLVYVDAIAIAIVGFSVTISMAK. Residues 360 to 370 are Cytoplasmic-facing; sequence TLANKHGYQVD. The chain crosses the membrane as a helical span at residues 371-388; the sequence is GNQELIALGICNSIGSLF. Over 389–396 the chain is Extracellular; that stretch reads QTFSISCS. The helical transmembrane segment at 397 to 406 threads the bilayer; it reads LSRSLVQEGT. A salicylate-binding site is contributed by S398. Topologically, residues 407–410 are cytoplasmic; sequence GGKT. The helical transmembrane segment at 411-431 threads the bilayer; it reads QLAGCLASLMILLVILATGFL. The Extracellular segment spans residues 432 to 436; sequence FESLP. Residues 437 to 464 form a helical membrane-spanning segment; it reads QAVLSAIVIVNLKGMFMQFSDLPFFWRT. S465 is a topological domain (cytoplasmic). The helical transmembrane segment at 466 to 481 threads the bilayer; the sequence is KIELTIWLTTFVSSLF. Residues 482-484 lie on the Extracellular side of the membrane; the sequence is LGL. A helical transmembrane segment spans residues 485–504; sequence DYGLITAVIIALLTVIYRTQ. An extended region for STAS domain region spans residues 505–718; the sequence is SPSYTVLGQL…AVLGSQVREA (214 aa). Residues 505–744 lie on the Cytoplasmic side of the membrane; sequence SPSYTVLGQL…PNATPTTPEA (240 aa). One can recognise an STAS domain in the interval 525-713; that stretch reads AYEEVKEIPG…HSIHDAVLGS (189 aa). The segment at 720–744 is disordered; it reads AEQETTVLPPQEDMEPNATPTTPEA.

The protein belongs to the SLC26A/SulP transporter (TC 2.A.53) family. In terms of assembly, homodimer. Interacts (via STAS domain) with CALM; this interaction is calcium-dependent and the STAS domain interacts with only one lobe of CALM which is an elongated conformation. Interacts with MYH1. In terms of tissue distribution, specifically expressed in outer hair cells of cochleae (at protein level). Not detected in other cells of the organ of Corti.

It is found in the lateral cell membrane. It catalyses the reaction 2 hydrogencarbonate(in) + chloride(out) = 2 hydrogencarbonate(out) + chloride(in). Salicylate, an inhibitor of outer hair cell motility, acts as a competitive antagonist at the prestin anion-binding site. Voltage-sensitive motor protein that drives outer hair cell (OHC) electromotility (eM) and participates in sound amplification in the hearing organ. Converts changes in the transmembrane electric potential into mechanical displacements resulting in the coupling of its expansion to movement of a charged voltage sensor across the lipid membrane. The nature of the voltage sensor is not completely clear, and two models compete. In the first model, acts as an incomplete transporter where intracellular chloride anion acts as extrinsic voltage sensor that drives conformational change in the protein which is sufficient to produce a length change in the plane of the membrane and hence in the length of the OHC. The second model in which multiple charged amino acid residues are distributed at the intracellular and extracellular membrane interfaces that form an intrinsic voltage sensor, whose movement produces the non-linear capacitance (NLC). However, the effective voltage sensor may be the result of a hybrid voltage sensor assembled from intrinsic charge (charged residues) and extrinsic charge (bound anion). Notably, binding of anions to the anion-binding pocket partially neutralizes the intrinsic positive charge rather than to form an electrically negative sensor, therefore remaining charge may serve as voltage sensor that, after depolarization, moves from down (expanded state) to up (contracted) conformation, which is accompanied by an eccentric contraction of the intermembrane cross-sectional area of the protein as well as a major increase in the hydrophobic thickness of the protein having as consequences the plasma membrane thickening and the cell contraction after membrane depolarization. The anion-binding pocket transits from the inward-open (Down) state, where it is exposed toward the intracellular solvent in the absence of anion, to the occluded (Up) state upon anion binding. Salicylate competes for the anion-binding site and inhibits the voltage-sensor movement, and therefore inhibits the charge transfer and electromotility by displacing Cl(-) from the anion-binding site and by preventing the structural transitions to the contracted state. In addition, can act as a weak Cl(-)/HCO3(-) antiporter across the cell membrane and so regulate the intracellular pH of the outer hair cells (OHCs), while firstly found as being unable to mediate electrogenic anion transport. Moreover, supports a role in cardiac mechanical amplification serving as an elastic element to enhance the actomyosin- based sarcomere contraction system. This chain is Prestin, found in Rattus norvegicus (Rat).